The primary structure comprises 488 residues: ATP synthase subunit beta (488 aa).

ATP is bound at residue 164-171; it reads GGAGMGKT.

The protein belongs to the ATPase alpha/beta chains family. As to quaternary structure, F-type ATPases have 2 components, CF(1) - the catalytic core - and CF(0) - the membrane proton channel. CF(1) has five subunits: alpha(3), beta(3), gamma(1), delta(1), epsilon(1). CF(0) has four main subunits: a(1), b(1), b'(1) and c(9-12).

Its subcellular location is the cellular thylakoid membrane. The enzyme catalyses ATP + H2O + 4 H(+)(in) = ADP + phosphate + 5 H(+)(out). Its function is as follows. Produces ATP from ADP in the presence of a proton gradient across the membrane. The catalytic sites are hosted primarily by the beta subunits. The polypeptide is ATP synthase subunit beta (Synechococcus sp. (strain RCC307)).